The chain runs to 288 residues: CUF1-dependent copper transporter 1 (288 aa).

The N-linked (GlcNAc...) asparagine glycan is linked to Asn-18. Residues Met-42–Phe-62 traverse the membrane as a helical segment. Disordered stretches follow at residues Pro-106–Leu-125 and Arg-154–Val-180. Polar residues predominate over residues Glu-158 to His-167. The span at Ser-168–Gly-177 shows a compositional bias: low complexity. Residues Leu-251 to Cys-271 traverse the membrane as a helical segment.

This sequence belongs to the copper transporter (Ctr) (TC 1.A.56) family. SLC31A subfamily. Interacts with the copper acquisition factor BIM1.

The protein localises to the cell membrane. High affinity copper transporter involved in Cu(+) import into the cell upon copper-limitating conditions. Functions with BIM1 and probably also FRE4 and FRE7, where FRE4 and FRE7 metalloreductases liberate the Cu(2+) bound to the BIM1 copper-binding site for subsequent import of Cu(+) into the cell by CTR1, via the reduction of BIM1-bound Cu(2+) to Cu(+) to reduce binding affinity for BIM1 but increase affinity for CTR1. The BIM1-CTR1 pathway for copper uptake plays a key role in colonization in the brain where copper amounts are low and thus in cryptococcal meningitis. This chain is CUF1-dependent copper transporter 1, found in Cryptococcus neoformans var. grubii serotype A (strain H99 / ATCC 208821 / CBS 10515 / FGSC 9487) (Filobasidiella neoformans var. grubii).